A 204-amino-acid chain; its full sequence is N-(5'-phosphoribosyl)anthranilate isomerase (204 aa).

The protein belongs to the TrpF family.

The catalysed reaction is N-(5-phospho-beta-D-ribosyl)anthranilate = 1-(2-carboxyphenylamino)-1-deoxy-D-ribulose 5-phosphate. It participates in amino-acid biosynthesis; L-tryptophan biosynthesis; L-tryptophan from chorismate: step 3/5. The sequence is that of N-(5'-phosphoribosyl)anthranilate isomerase from Bacillus cereus (strain AH820).